A 209-amino-acid polypeptide reads, in one-letter code: Potassium-transporting ATPase KdpC subunit (209 aa).

A helical membrane pass occupies residues 10–30; sequence VISLVFLFVLGFLFPTVTSLI.

Belongs to the KdpC family. As to quaternary structure, the system is composed of three essential subunits: KdpA, KdpB and KdpC.

It is found in the cell membrane. Part of the high-affinity ATP-driven potassium transport (or Kdp) system, which catalyzes the hydrolysis of ATP coupled with the electrogenic transport of potassium into the cytoplasm. This subunit acts as a catalytic chaperone that increases the ATP-binding affinity of the ATP-hydrolyzing subunit KdpB by the formation of a transient KdpB/KdpC/ATP ternary complex. The polypeptide is Potassium-transporting ATPase KdpC subunit (Thermoplasma volcanium (strain ATCC 51530 / DSM 4299 / JCM 9571 / NBRC 15438 / GSS1)).